We begin with the raw amino-acid sequence, 539 residues long: Cytochrome P450 monooxygenase tenB (539 aa).

The helical transmembrane segment at 13-33 (LGYYEKVAGVLGFLSIALLFW) threads the bilayer. The tract at residues 439–460 (PFRFSRASKDDDDDGKSTSSHA) is disordered. Heme is bound at residue Cys-481.

This sequence belongs to the cytochrome P450 family. Heme serves as cofactor.

The protein resides in the membrane. It participates in secondary metabolite biosynthesis. Cytochrome P450 monooxygenase; part of the gene cluster that mediates the biosynthesis of tenellin-type 2-pyridones, iron-chelating compounds involved in iron stress tolerance, competition with the natural competitor fungus Metarhizium robertsii and insect hosts infection. TenB catalyzes the selective N-hydroxylation of the 2-pyridone nitrogen of yield tellinin and 15-hydroxytellenin (15-HT), respectively. The pathway begins with the assembly of the polyketide-amino acid backbone by the hybrid PKS-NRPS tenS with the help of the enoyl reductase tenC. These enzymes catalyze the synthesis of the pyrrolidine-2-dione intermediates pretellinin A, 11-hydropretellenin A, 12-hydropretellenin A, 13-hydropretellenin A, 14-hydropretellenin A, 12-oxopretellenin A and prototellinin D. The cytochrome P450 monooxygenase tenA then catalyzes an oxidative ring expansion of pretenellin A and 14-hydropretellenin A to form the 2-pyridone core, leading to pretenellin B and pyridovericin, respectively. The cytochrome P450 monooxygenase tenB is then required for the selective N-hydroxylation of the 2-pyridone nitrogen of yield tellinin and 15-hydroxytellenin (15-HT), respectively. The UDP-glucosyltransferase GT1 and the methyltransferase MT1, located outside the tenS gene cluster, contribute to the stepwise glycosylation and methylation of 15-HT to obtain the glycoside pyridovericin-N-O-(4-O-methyl-beta-D-glucopyranoside) (PMGP). Additional related compounds such as 1-O-methyl-15-HT, (8Z)-1-O-methyl-15-HT, and O-methyltenellin A are also produced but the enzymes involved in their biosynthesis have still to be determined. The protein is Cytochrome P450 monooxygenase tenB of Beauveria bassiana (White muscardine disease fungus).